Here is a 405-residue protein sequence, read N- to C-terminus: Tyrosine--tRNA ligase (405 aa).

An L-tyrosine-binding site is contributed by Tyr35. The 'HIGH' region motif lies at 40–49 (ATSSSLHIGH). L-tyrosine contacts are provided by Tyr166 and Gln170. Residues 226-230 (KMGKS) carry the 'KMSKS' region motif. Lys229 is an ATP binding site. Positions 340-404 (VLLINLMLDS…VGKKKFLRIV (65 aa)) constitute an S4 RNA-binding domain.

This sequence belongs to the class-I aminoacyl-tRNA synthetase family. TyrS type 1 subfamily. Homodimer.

Its subcellular location is the cytoplasm. It catalyses the reaction tRNA(Tyr) + L-tyrosine + ATP = L-tyrosyl-tRNA(Tyr) + AMP + diphosphate + H(+). Catalyzes the attachment of tyrosine to tRNA(Tyr) in a two-step reaction: tyrosine is first activated by ATP to form Tyr-AMP and then transferred to the acceptor end of tRNA(Tyr). This Borreliella afzelii (strain PKo) (Borrelia afzelii) protein is Tyrosine--tRNA ligase.